A 303-amino-acid chain; its full sequence is Probable 5-dehydro-4-deoxyglucarate dehydratase (303 aa).

This sequence belongs to the DapA family.

The catalysed reaction is 5-dehydro-4-deoxy-D-glucarate + H(+) = 2,5-dioxopentanoate + CO2 + H2O. The protein operates within carbohydrate acid metabolism; D-glucarate degradation; 2,5-dioxopentanoate from D-glucarate: step 2/2. The protein is Probable 5-dehydro-4-deoxyglucarate dehydratase of Pseudomonas putida (strain W619).